The sequence spans 293 residues: DNA repair protein RecO (293 aa).

The protein belongs to the RecO family.

Involved in DNA repair and RecF pathway recombination. The polypeptide is DNA repair protein RecO (Cyanothece sp. (strain PCC 7425 / ATCC 29141)).